The primary structure comprises 668 residues: Small ribosomal subunit protein mS81 (rPPR8) (668 aa).

Residues 1–36 (MRYQQWRLMLLRSYHRSHLPYLSPCSQVTSISSRSF) constitute a mitochondrion transit peptide. PPR repeat units lie at residues 286 to 320 (DEKT…GYEV), 321 to 355 (EIET…SSSS), 396 to 430 (TDSL…GYVP), 431 to 465 (SGDM…GNNL), 466 to 496 (DDKA…MVGN), 502 to 537 (ADYS…QLKP), and 543 to 577 (KSLV…GFPP).

The protein belongs to the PPR family. P subfamily. In terms of assembly, component of the mitochondrial ribosome small subunit.

It localises to the mitochondrion. This chain is Small ribosomal subunit protein mS81 (rPPR8), found in Arabidopsis thaliana (Mouse-ear cress).